Here is a 463-residue protein sequence, read N- to C-terminus: ATP-dependent protease ATPase subunit HslU (463 aa).

ATP is bound by residues Ile19, 61–66, Asp277, Glu341, and Arg413; that span reads GVGKTE.

This sequence belongs to the ClpX chaperone family. HslU subfamily. A double ring-shaped homohexamer of HslV is capped on each side by a ring-shaped HslU homohexamer. The assembly of the HslU/HslV complex is dependent on binding of ATP.

It localises to the cytoplasm. Its function is as follows. ATPase subunit of a proteasome-like degradation complex; this subunit has chaperone activity. The binding of ATP and its subsequent hydrolysis by HslU are essential for unfolding of protein substrates subsequently hydrolyzed by HslV. HslU recognizes the N-terminal part of its protein substrates and unfolds these before they are guided to HslV for hydrolysis. In Bacillus cereus (strain ATCC 14579 / DSM 31 / CCUG 7414 / JCM 2152 / NBRC 15305 / NCIMB 9373 / NCTC 2599 / NRRL B-3711), this protein is ATP-dependent protease ATPase subunit HslU.